The chain runs to 839 residues: Probable inorganic carbon transporter subunit DabA (839 aa).

Zn(2+) is bound by residues C353, D355, H537, and C552.

It belongs to the inorganic carbon transporter (TC 9.A.2) DabA family. In terms of assembly, forms a complex with DabB. Requires Zn(2+) as cofactor.

It localises to the cell membrane. Part of an energy-coupled inorganic carbon pump. The sequence is that of Probable inorganic carbon transporter subunit DabA from Chloroflexus aggregans (strain MD-66 / DSM 9485).